A 408-amino-acid chain; its full sequence is MKNQLIDRLTRYTTIDTQSDPKSTTTPSTEKQWDLLHLLEKELQQLGLPTDLDENGYLFATLESNIDVDVPTVGFLAHVDTSPDFNASNVKPQIIENYDGKPYKLGNTKRVLDPKVFPELNSLVGHTLMVTDGTSLLGADDKAGIVEIMEAICYLQEHPEIKHGTIRIGFTPDEEIGRGPHKFDVDRFNADFAYTMDGSQYGELQYESFNAAEAVITCHGVNVHPGSAKNAMVNAIRLGEQFDSLLPDSEVPERTEGYEGFYHLMNFEGTVEKATLQYIIRDHDKKQFELRKKRILEIRDDINAHFENYPVKVDISDQYFNMAEKILPLPHIIDIPKRVFAKLDIPANTEPIRGGTDGSQLSFMGLPTPNIFTGCGNFHGPYEYASIDVMEKAVQVIIGIVEDIAENH.

Residues 1-28 are disordered; it reads MKNQLIDRLTRYTTIDTQSDPKSTTTPS. A compositionally biased stretch (polar residues) spans 11-28; that stretch reads RYTTIDTQSDPKSTTTPS. Position 78 (H78) interacts with Zn(2+). D80 is a catalytic residue. Zn(2+) is bound at residue D140. The active-site Proton acceptor is the E174. The Zn(2+) site is built by E175, D197, and H379.

This sequence belongs to the peptidase M20B family. Requires Zn(2+) as cofactor.

It localises to the cytoplasm. It carries out the reaction Release of the N-terminal residue from a tripeptide.. Functionally, cleaves the N-terminal amino acid of tripeptides. In Staphylococcus aureus (strain USA300 / TCH1516), this protein is Peptidase T.